The chain runs to 198 residues: Holliday junction branch migration complex subunit RuvA (198 aa).

The domain I stretch occupies residues 1–63; the sequence is MIAYLSGAVR…EDAQLLFGFL (63 aa). The tract at residues 64-142 is domain II; it reads DTDSLRLFDL…EHLAAGAPVS (79 aa). The tract at residues 143 to 150 is flexible linker; the sequence is AGKAALTS. Positions 150-198 are domain III; it reads STAGRDAIEALLALGFREPQVRSVVAELLAADPEQSADALIRKGLGKLR.

This sequence belongs to the RuvA family. As to quaternary structure, homotetramer. Forms an RuvA(8)-RuvB(12)-Holliday junction (HJ) complex. HJ DNA is sandwiched between 2 RuvA tetramers; dsDNA enters through RuvA and exits via RuvB. An RuvB hexamer assembles on each DNA strand where it exits the tetramer. Each RuvB hexamer is contacted by two RuvA subunits (via domain III) on 2 adjacent RuvB subunits; this complex drives branch migration. In the full resolvosome a probable DNA-RuvA(4)-RuvB(12)-RuvC(2) complex forms which resolves the HJ.

Its subcellular location is the cytoplasm. In terms of biological role, the RuvA-RuvB-RuvC complex processes Holliday junction (HJ) DNA during genetic recombination and DNA repair, while the RuvA-RuvB complex plays an important role in the rescue of blocked DNA replication forks via replication fork reversal (RFR). RuvA specifically binds to HJ cruciform DNA, conferring on it an open structure. The RuvB hexamer acts as an ATP-dependent pump, pulling dsDNA into and through the RuvAB complex. HJ branch migration allows RuvC to scan DNA until it finds its consensus sequence, where it cleaves and resolves the cruciform DNA. This Deinococcus geothermalis (strain DSM 11300 / CIP 105573 / AG-3a) protein is Holliday junction branch migration complex subunit RuvA.